An 805-amino-acid polypeptide reads, in one-letter code: Angiotensin-converting enzyme 2 (805 aa).

Positions 1–17 (MSSSSWLLLSLVAVTTA) are cleaved as a signal peptide. Residues 18–740 (QSLTEENAKT…LEPPYQPPVT (723 aa)) are Extracellular-facing. A Peptidase M2 domain is found at 19-607 (SLTEENAKTF…QNRNSFVGWN (589 aa)). N53 carries N-linked (GlcNAc...) asparagine glycosylation. A disulfide bridge connects residues C133 and C141. Position 169 (R169) interacts with chloride. Residues R273 and 345 to 346 (HP) contribute to the substrate site. C344 and C361 are joined by a disulfide. Zn(2+) is bound at residue H374. E375 (proton acceptor) is an active-site residue. H378 and E402 together coordinate Zn(2+). Residues W477 and K481 each contribute to the chloride site. The active-site Proton donor is H505. Substrate is bound at residue Y515. The cysteines at positions 530 and 542 are disulfide-linked. 2 N-linked (GlcNAc...) asparagine glycosylation sites follow: N536 and N546. A Collectrin-like domain is found at 614–805 (ADQSIKVRIS…QNSDDAQTSF (192 aa)). Residues 652–659 (RKYFSIIK) form an essential for cleavage by ADAM17 region. N-linked (GlcNAc...) asparagine glycosylation is found at N660 and N690. The segment at 697-716 (RSEVEDAIRMSRGRINDVFG) is essential for cleavage by TMPRSS11D and TMPRSS2. The chain crosses the membrane as a helical span at residues 741–761 (IWLIIFGVVMALVVVGIIILI). The Cytoplasmic segment spans residues 762-805 (VTGIKGRKKKNETKREENPYDSMDIGKGESNAGFQNSDDAQTSF). Residues 771 to 805 (KNETKREENPYDSMDIGKGESNAGFQNSDDAQTSF) form a disordered region. The LIR motif lies at 778–786 (ENPYDSMDI). Position 781 is a phosphotyrosine (Y781). Residues 781 to 784 (YDSM) carry the Endocytic sorting signal motif. The short motif at 781-785 (YDSMD) is the SH2-binding element. S783 carries the phosphoserine modification. K788 participates in a covalent cross-link: Glycyl lysine isopeptide (Lys-Gly) (interchain with G-Cter in ubiquitin). Positions 792-795 (NAGF) match the PTB motif. Polar residues predominate over residues 793 to 805 (AGFQNSDDAQTSF). Positions 803 to 805 (TSF) match the PDZ-binding motif.

Belongs to the peptidase M2 family. As to quaternary structure, homodimer. Interacts with the catalytically active form of TMPRSS2. Interacts with SLC6A19; this interaction is essential for expression and function of SLC6A19 in intestine. Interacts with ITGA5:ITGB1. Probably interacts (via endocytic sorting signal motif) with AP2M1; the interaction is inhibited by phosphorylation of Tyr-781. Interacts (via PDZ-binding motif) with NHERF1 (via PDZ domains); the interaction may enhance ACE2 membrane residence. In terms of assembly, (Microbial infection) Weakly interacts with SARS-CoV S protein. It depends on Zn(2+) as a cofactor. Requires chloride as cofactor. Proteolytic cleavage by ADAM17 generates a secreted form. Also cleaved by serine proteases: TMPRSS2, TMPRSS11D and HPN/TMPRSS1. In terms of processing, phosphorylated. Phosphorylation at Tyr-781 probably inhibits interaction with AP2M1 and enables interactions with proteins containing SH2 domains. Post-translationally, ubiquitinated. Ubiquitinated on Lys-788 via 'Lys-48'-linked ubiquitin. 'Lys-48'-linked deubiquitinated by USP50 on the Lys-788; leading to its stabilization. In terms of tissue distribution, expressed in heart, kidney and forebrain (at protein level). Expressed in the small intestine, with expression in the intestinal brush border (at protein level). Ubiquitously expressed, with highest levels in ileum, kidney and lung. In lung, expressed on vascular endothelial and airway epithelial cells. Also expressed at high levels in lung secretory club and goblet cells as well as in alveolar type 2 cells.

It is found in the secreted. The protein resides in the cell membrane. The protein localises to the cytoplasm. Its subcellular location is the cell projection. It localises to the cilium. It is found in the apical cell membrane. The catalysed reaction is angiotensin II + H2O = angiotensin-(1-7) + L-phenylalanine. The enzyme catalyses angiotensin I + H2O = angiotensin-(1-9) + L-leucine. It catalyses the reaction bradykinin(1-8) + H2O = bradykinin(1-7) + L-phenylalanine. It carries out the reaction neurotensin + H2O = neurotensin-(1-12) + L-leucine. The catalysed reaction is kinetensin + H2O = kinetensin-(1-8) + L-leucine. The enzyme catalyses dynorphin A-(1-13) + H2O = dynorphin A-(1-12) + L-lysine. It catalyses the reaction apelin-13 + H2O = apelin-12 + L-phenylalanine. It carries out the reaction [Pyr1]apelin-13 + H2O = [Pyr1]apelin-12 + L-phenylalanine. The catalysed reaction is apelin-17 + H2O = apelin-16 + L-phenylalanine. In terms of biological role, essential counter-regulatory carboxypeptidase of the renin-angiotensin hormone system that is a critical regulator of blood volume, systemic vascular resistance, and thus cardiovascular homeostasis. Converts angiotensin I to angiotensin 1-9, a nine-amino acid peptide with anti-hypertrophic effects in cardiomyocytes, and angiotensin II to angiotensin 1-7, which then acts as a beneficial vasodilator and anti-proliferation agent, counterbalancing the actions of the vasoconstrictor angiotensin II. Also removes the C-terminal residue from three other vasoactive peptides, neurotensin, kinetensin, and des-Arg bradykinin, but is not active on bradykinin. Also cleaves other biological peptides, such as apelins, casomorphins and dynorphin A. By cleavage of angiotensin II, may be an important regulator of heart function. By cleavage of angiotensin II, may also have a protective role in acute lung injury. Plays an important role in amino acid transport by acting as binding partner of amino acid transporter SLC6A19, regulating its trafficking on the cell surface and its activity. The sequence is that of Angiotensin-converting enzyme 2 (Ace2) from Mus musculus (Mouse).